A 101-amino-acid polypeptide reads, in one-letter code: Small ribosomal subunit protein uS10 (101 aa).

Belongs to the universal ribosomal protein uS10 family. As to quaternary structure, part of the 30S ribosomal subunit.

Its function is as follows. Involved in the binding of tRNA to the ribosomes. This chain is Small ribosomal subunit protein uS10, found in Corynebacterium aurimucosum (strain ATCC 700975 / DSM 44827 / CIP 107346 / CN-1) (Corynebacterium nigricans).